The chain runs to 272 residues: Nitrogenase iron protein (272 aa).

8 to 15 is an ATP binding site; the sequence is GKGGIGKS. A [4Fe-4S] cluster-binding site is contributed by Cys-94. Residue Arg-97 is modified to ADP-ribosylarginine; by dinitrogenase reductase ADP-ribosyltransferase. Cys-129 contributes to the [4Fe-4S] cluster binding site.

The protein belongs to the NifH/BchL/ChlL family. As to quaternary structure, homodimer. [4Fe-4S] cluster serves as cofactor. In terms of processing, the reversible ADP-ribosylation of Arg-97 inactivates the nitrogenase reductase and regulates nitrogenase activity.

It carries out the reaction N2 + 8 reduced [2Fe-2S]-[ferredoxin] + 16 ATP + 16 H2O = H2 + 8 oxidized [2Fe-2S]-[ferredoxin] + 2 NH4(+) + 16 ADP + 16 phosphate + 6 H(+). The key enzymatic reactions in nitrogen fixation are catalyzed by the nitrogenase complex, which has 2 components: the iron protein and the molybdenum-iron protein. The polypeptide is Nitrogenase iron protein (Alkaliphilus metalliredigens (strain QYMF)).